Consider the following 101-residue polypeptide: Small ribosomal subunit protein uS14 (101 aa).

The protein belongs to the universal ribosomal protein uS14 family. In terms of assembly, part of the 30S ribosomal subunit. Contacts proteins S3 and S10.

In terms of biological role, binds 16S rRNA, required for the assembly of 30S particles and may also be responsible for determining the conformation of the 16S rRNA at the A site. This is Small ribosomal subunit protein uS14 from Blochmanniella pennsylvanica (strain BPEN).